Reading from the N-terminus, the 335-residue chain is Mitochondrial carrier protein CoAc2 (335 aa).

6 helical membrane-spanning segments follow: residues 12–32, 75–95, 119–139, 187–207, 225–242, and 280–302; these read SGPGLPLAVRELLAGGVAGGV, FYRGNGASVARIVPYAALHYM, LVAGSIAGGTAVICTYPLDLV, GMAPSLYGIFPYSGLKFYFYE, LGCGSVAGLLGQTITYPL, and LFSGLSINYLKVVPSVAIGFTVY. Solcar repeat units lie at residues 17 to 103, 113 to 212, and 219 to 308; these read PLAV…YRRW, QGPV…MKSH, and KGII…MKVC.

Belongs to the mitochondrial carrier (TC 2.A.29) family. Expressed throughout the plant.

The protein localises to the mitochondrion inner membrane. Its function is as follows. Required for the accumulation of coenzyme A in the mitochondrial matrix. The sequence is that of Mitochondrial carrier protein CoAc2 from Zea mays (Maize).